The chain runs to 413 residues: Multifunctional CCA protein (413 aa).

The ATP site is built by G8 and R11. Residues G8 and R11 each coordinate CTP. Mg(2+) is bound by residues D21 and D23. ATP-binding residues include R91, R137, and R140. The CTP site is built by R91, R137, and R140. The region spanning 228–329 (TGVHTLMTLS…VKLFDAIDAW (102 aa)) is the HD domain.

The protein belongs to the tRNA nucleotidyltransferase/poly(A) polymerase family. Bacterial CCA-adding enzyme type 1 subfamily. Monomer. Can also form homodimers and oligomers. Requires Mg(2+) as cofactor. The cofactor is Ni(2+).

It catalyses the reaction a tRNA precursor + 2 CTP + ATP = a tRNA with a 3' CCA end + 3 diphosphate. It carries out the reaction a tRNA with a 3' CCA end + 2 CTP + ATP = a tRNA with a 3' CCACCA end + 3 diphosphate. Functionally, catalyzes the addition and repair of the essential 3'-terminal CCA sequence in tRNAs without using a nucleic acid template. Adds these three nucleotides in the order of C, C, and A to the tRNA nucleotide-73, using CTP and ATP as substrates and producing inorganic pyrophosphate. tRNA 3'-terminal CCA addition is required both for tRNA processing and repair. Also involved in tRNA surveillance by mediating tandem CCA addition to generate a CCACCA at the 3' terminus of unstable tRNAs. While stable tRNAs receive only 3'-terminal CCA, unstable tRNAs are marked with CCACCA and rapidly degraded. The sequence is that of Multifunctional CCA protein from Salmonella choleraesuis (strain SC-B67).